We begin with the raw amino-acid sequence, 539 residues long: Phosphoenolpyruvate carboxykinase (ATP) (539 aa).

Residues Arg-64, Tyr-206, and Lys-212 each coordinate substrate. Residues Lys-212, His-231, and 247–255 (GLSGTGKTT) contribute to the ATP site. Mn(2+) is bound by residues Lys-212 and His-231. Asp-268 contributes to the Mn(2+) binding site. Residues Glu-296, Arg-332, 448 to 449 (RI), and Thr-454 contribute to the ATP site. Arg-332 is a binding site for substrate.

Belongs to the phosphoenolpyruvate carboxykinase (ATP) family. As to quaternary structure, monomer. Mn(2+) serves as cofactor.

The protein resides in the cytoplasm. It carries out the reaction oxaloacetate + ATP = phosphoenolpyruvate + ADP + CO2. Its pathway is carbohydrate biosynthesis; gluconeogenesis. In terms of biological role, involved in the gluconeogenesis. Catalyzes the conversion of oxaloacetate (OAA) to phosphoenolpyruvate (PEP) through direct phosphoryl transfer between the nucleoside triphosphate and OAA. The protein is Phosphoenolpyruvate carboxykinase (ATP) of Salmonella arizonae (strain ATCC BAA-731 / CDC346-86 / RSK2980).